Here is a 400-residue protein sequence, read N- to C-terminus: Centrosomal protein CEP57L1 (400 aa).

At S45 the chain carries Phosphoserine. 2 coiled-coil regions span residues 47–111 (NNQA…KKDI) and 138–213 (NVER…QDRA). 2 disordered regions span residues 222–261 (REPP…EPVS) and 314–400 (MESK…KWEQ). Residues 244-258 (RTTSQARANPQSSGE) are compositionally biased toward polar residues. A coiled-coil region spans residues 261–345 (SICDSLSELL…EKIENSRINE (85 aa)). 2 stretches are compositionally biased toward basic and acidic residues: residues 314 to 342 (MESK…ENSR) and 391 to 400 (LRRDDIKWEQ).

The protein belongs to the translokin family.

It localises to the cytoplasm. The protein resides in the cytoskeleton. The protein localises to the microtubule organizing center. Its subcellular location is the centrosome. Centrosomal protein which may be required for microtubule attachment to centrosomes. The chain is Centrosomal protein CEP57L1 (Cep57l1) from Mus musculus (Mouse).